The primary structure comprises 171 residues: Shikimate kinase (171 aa).

An ATP-binding site is contributed by 11 to 16; it reads GTGKTT. Residue threonine 15 participates in Mg(2+) binding. Substrate is bound by residues aspartate 33, arginine 57, and glycine 79. Position 117 (arginine 117) interacts with ATP. Arginine 136 is a binding site for substrate.

Belongs to the shikimate kinase family. Monomer. It depends on Mg(2+) as a cofactor.

It localises to the cytoplasm. The catalysed reaction is shikimate + ATP = 3-phosphoshikimate + ADP + H(+). It participates in metabolic intermediate biosynthesis; chorismate biosynthesis; chorismate from D-erythrose 4-phosphate and phosphoenolpyruvate: step 5/7. Catalyzes the specific phosphorylation of the 3-hydroxyl group of shikimic acid using ATP as a cosubstrate. This chain is Shikimate kinase, found in Caldanaerobacter subterraneus subsp. tengcongensis (strain DSM 15242 / JCM 11007 / NBRC 100824 / MB4) (Thermoanaerobacter tengcongensis).